A 785-amino-acid chain; its full sequence is Endonuclease MutS2 (785 aa).

Position 335–342 (335–342 (GPNTGGKT)) interacts with ATP. One can recognise a Smr domain in the interval 710–785 (LDLRGERYED…GNGVTIVEFK (76 aa)).

Belongs to the DNA mismatch repair MutS family. MutS2 subfamily. Homodimer. Binds to stalled ribosomes, contacting rRNA.

In terms of biological role, endonuclease that is involved in the suppression of homologous recombination and thus may have a key role in the control of bacterial genetic diversity. Its function is as follows. Acts as a ribosome collision sensor, splitting the ribosome into its 2 subunits. Detects stalled/collided 70S ribosomes which it binds and splits by an ATP-hydrolysis driven conformational change. Acts upstream of the ribosome quality control system (RQC), a ribosome-associated complex that mediates the extraction of incompletely synthesized nascent chains from stalled ribosomes and their subsequent degradation. Probably generates substrates for RQC. In Listeria monocytogenes serovar 1/2a (strain ATCC BAA-679 / EGD-e), this protein is Endonuclease MutS2.